A 324-amino-acid polypeptide reads, in one-letter code: Type II restriction enzyme AplI (324 aa).

Belongs to the BsuBI/PstI type II restriction endonuclease family. Mg(2+) serves as cofactor.

The catalysed reaction is Endonucleolytic cleavage of DNA to give specific double-stranded fragments with terminal 5'-phosphates.. Activated by K(+) and Na(+) ions, whereas NH(4)(+) ions appear to inhibit endonuclease activity. A P subtype restriction enzyme that recognizes the double-stranded sequence 5'-CTGCAG-3' and cleaves after A-5. In Arthrospira platensis (strain NIES-39 / UTEX 3086 / IAM M-135) (Spirulina platensis), this protein is Type II restriction enzyme AplI (aplIR).